We begin with the raw amino-acid sequence, 304 residues long: UDP-3-O-acyl-N-acetylglucosamine deacetylase (304 aa).

Zn(2+) contacts are provided by His-78, His-237, and Asp-241. The active-site Proton donor is His-264.

The protein belongs to the LpxC family. Zn(2+) serves as cofactor.

The enzyme catalyses a UDP-3-O-[(3R)-3-hydroxyacyl]-N-acetyl-alpha-D-glucosamine + H2O = a UDP-3-O-[(3R)-3-hydroxyacyl]-alpha-D-glucosamine + acetate. It participates in glycolipid biosynthesis; lipid IV(A) biosynthesis; lipid IV(A) from (3R)-3-hydroxytetradecanoyl-[acyl-carrier-protein] and UDP-N-acetyl-alpha-D-glucosamine: step 2/6. Functionally, catalyzes the hydrolysis of UDP-3-O-myristoyl-N-acetylglucosamine to form UDP-3-O-myristoylglucosamine and acetate, the committed step in lipid A biosynthesis. This is UDP-3-O-acyl-N-acetylglucosamine deacetylase from Legionella pneumophila (strain Paris).